Here is a 187-residue protein sequence, read N- to C-terminus: ATP synthase subunit delta (187 aa).

Belongs to the ATPase delta chain family. F-type ATPases have 2 components, F(1) - the catalytic core - and F(0) - the membrane proton channel. F(1) has five subunits: alpha(3), beta(3), gamma(1), delta(1), epsilon(1). F(0) has three main subunits: a(1), b(2) and c(10-14). The alpha and beta chains form an alternating ring which encloses part of the gamma chain. F(1) is attached to F(0) by a central stalk formed by the gamma and epsilon chains, while a peripheral stalk is formed by the delta and b chains.

Its subcellular location is the cell membrane. Functionally, f(1)F(0) ATP synthase produces ATP from ADP in the presence of a proton or sodium gradient. F-type ATPases consist of two structural domains, F(1) containing the extramembraneous catalytic core and F(0) containing the membrane proton channel, linked together by a central stalk and a peripheral stalk. During catalysis, ATP synthesis in the catalytic domain of F(1) is coupled via a rotary mechanism of the central stalk subunits to proton translocation. This protein is part of the stalk that links CF(0) to CF(1). It either transmits conformational changes from CF(0) to CF(1) or is implicated in proton conduction. In Mesomycoplasma hyopneumoniae (strain 7448) (Mycoplasma hyopneumoniae), this protein is ATP synthase subunit delta.